Reading from the N-terminus, the 431-residue chain is Adenylosuccinate synthetase (431 aa).

GTP-binding positions include 13 to 19 and 41 to 43; these read GDEGKGK and GHT. Aspartate 14 functions as the Proton acceptor in the catalytic mechanism. Aspartate 14 and glycine 41 together coordinate Mg(2+). IMP-binding positions include 14 to 17, 39 to 42, threonine 130, arginine 144, glutamine 225, threonine 240, and arginine 304; these read DEGK and NAGH. Histidine 42 serves as the catalytic Proton donor. Position 300 to 306 (300 to 306) interacts with substrate; that stretch reads ATTGRAR. Residues arginine 306, 332-334, and 415-417 each bind GTP; these read KLD and STG.

It belongs to the adenylosuccinate synthetase family. As to quaternary structure, homodimer. Mg(2+) serves as cofactor.

The protein resides in the cytoplasm. The enzyme catalyses IMP + L-aspartate + GTP = N(6)-(1,2-dicarboxyethyl)-AMP + GDP + phosphate + 2 H(+). Its pathway is purine metabolism; AMP biosynthesis via de novo pathway; AMP from IMP: step 1/2. Functionally, plays an important role in the de novo pathway of purine nucleotide biosynthesis. Catalyzes the first committed step in the biosynthesis of AMP from IMP. The polypeptide is Adenylosuccinate synthetase (Ectopseudomonas mendocina (strain ymp) (Pseudomonas mendocina)).